The sequence spans 338 residues: Porphobilinogen deaminase (338 aa).

Position 265 is an S-(dipyrrolylmethanemethyl)cysteine (Cys265).

This sequence belongs to the HMBS family. Dipyrromethane is required as a cofactor.

The enzyme catalyses 4 porphobilinogen + H2O = hydroxymethylbilane + 4 NH4(+). It participates in porphyrin-containing compound metabolism; protoporphyrin-IX biosynthesis; coproporphyrinogen-III from 5-aminolevulinate: step 2/4. Its function is as follows. Tetrapolymerization of the monopyrrole PBG into the hydroxymethylbilane pre-uroporphyrinogen in several discrete steps. The polypeptide is Porphobilinogen deaminase (HEM3) (Yarrowia lipolytica (strain CLIB 122 / E 150) (Yeast)).